The sequence spans 413 residues: N5-carboxyaminoimidazole ribonucleotide synthase (413 aa).

The disordered stretch occupies residues 1–21; the sequence is MKRVSEQAGNPDGNPQAHVPG. ATP is bound by residues Lys122, Lys162, 199-202, Glu207, and 289-290; these read EEKV and NE. The ATP-grasp domain maps to 126–319; it reads RERLAELGAP…QFEQHLRAVM (194 aa).

This sequence belongs to the PurK/PurT family. Homodimer.

The enzyme catalyses 5-amino-1-(5-phospho-beta-D-ribosyl)imidazole + hydrogencarbonate + ATP = 5-carboxyamino-1-(5-phospho-D-ribosyl)imidazole + ADP + phosphate + 2 H(+). It functions in the pathway purine metabolism; IMP biosynthesis via de novo pathway; 5-amino-1-(5-phospho-D-ribosyl)imidazole-4-carboxylate from 5-amino-1-(5-phospho-D-ribosyl)imidazole (N5-CAIR route): step 1/2. Its function is as follows. Catalyzes the ATP-dependent conversion of 5-aminoimidazole ribonucleotide (AIR) and HCO(3)(-) to N5-carboxyaminoimidazole ribonucleotide (N5-CAIR). The sequence is that of N5-carboxyaminoimidazole ribonucleotide synthase from Corynebacterium ammoniagenes (Brevibacterium ammoniagenes).